We begin with the raw amino-acid sequence, 112 residues long: UPF0235 protein RHE_CH03912 (112 aa).

It belongs to the UPF0235 family.

In Rhizobium etli (strain ATCC 51251 / DSM 11541 / JCM 21823 / NBRC 15573 / CFN 42), this protein is UPF0235 protein RHE_CH03912.